The primary structure comprises 280 residues: Ribosomal RNA small subunit methyltransferase A (280 aa).

Residues asparagine 30, valine 32, glycine 57, glutamate 78, aspartate 108, and asparagine 125 each coordinate S-adenosyl-L-methionine.

The protein belongs to the class I-like SAM-binding methyltransferase superfamily. rRNA adenine N(6)-methyltransferase family. RsmA subfamily.

It localises to the cytoplasm. The catalysed reaction is adenosine(1518)/adenosine(1519) in 16S rRNA + 4 S-adenosyl-L-methionine = N(6)-dimethyladenosine(1518)/N(6)-dimethyladenosine(1519) in 16S rRNA + 4 S-adenosyl-L-homocysteine + 4 H(+). Its function is as follows. Specifically dimethylates two adjacent adenosines (A1518 and A1519) in the loop of a conserved hairpin near the 3'-end of 16S rRNA in the 30S particle. May play a critical role in biogenesis of 30S subunits. In Leifsonia xyli subsp. xyli (strain CTCB07), this protein is Ribosomal RNA small subunit methyltransferase A.